Reading from the N-terminus, the 144-residue chain is Large ribosomal subunit protein uL14 (144 aa).

It belongs to the universal ribosomal protein uL14 family. Part of the 50S ribosomal subunit. Forms a cluster with proteins L3 and L24e, part of which may contact the 16S rRNA in 2 intersubunit bridges.

Functionally, binds to 23S rRNA. Forms part of two intersubunit bridges in the 70S ribosome. The polypeptide is Large ribosomal subunit protein uL14 (Cenarchaeum symbiosum (strain A)).